A 463-amino-acid chain; its full sequence is Xanthone prenyltransferase B (463 aa).

This sequence belongs to the tryptophan dimethylallyltransferase family.

Its pathway is secondary metabolite biosynthesis. Its activity is regulated as follows. Mn(2+) and Co(2+) strongly enhance prenylation activity. Its function is as follows. Dehydrogenase involved in the conversion of monodictyphenone to the prenyl xanthones such as emericellin, shamixanthone and epishamixanthone. Monodictyphenone is first converted to variecoxanthone A via a paeciloxanthone intermediate by the consecutive actions of the FAD-dependent monooxygenase mdpD and the xanthone prenyltransferase xptB. XptB catalyzes regular O-prenylation at the hydroxy group of C-7 of the xanthone ring. Variecoxanthone A is further prenylated to emericellin by xptA before being reduced to shamixanthone and epishamixanthone by the dehydrogenase xptC. The polypeptide is Xanthone prenyltransferase B (Emericella nidulans (strain FGSC A4 / ATCC 38163 / CBS 112.46 / NRRL 194 / M139) (Aspergillus nidulans)).